The chain runs to 493 residues: Ketol-acid reductoisomerase (NADP(+)) (493 aa).

The KARI N-terminal Rossmann domain occupies 17 to 208 (LSQCRFMDRS…GGDRAGVLHS (192 aa)). Residues 45 to 48 (CGAQ), Arg-68, Arg-76, Ser-78, and 108 to 110 (DKQ) each bind NADP(+). Residue His-132 is part of the active site. An NADP(+)-binding site is contributed by Gly-158. 2 KARI C-terminal knotted domains span residues 209-344 (SFIA…NAPS) and 345-486 (SNEH…MKDM). Mg(2+) is bound by residues Asp-217, Glu-221, Glu-389, and Glu-393. Substrate is bound at residue Ser-414.

It belongs to the ketol-acid reductoisomerase family. Requires Mg(2+) as cofactor.

The enzyme catalyses (2R)-2,3-dihydroxy-3-methylbutanoate + NADP(+) = (2S)-2-acetolactate + NADPH + H(+). It carries out the reaction (2R,3R)-2,3-dihydroxy-3-methylpentanoate + NADP(+) = (S)-2-ethyl-2-hydroxy-3-oxobutanoate + NADPH + H(+). Its pathway is amino-acid biosynthesis; L-isoleucine biosynthesis; L-isoleucine from 2-oxobutanoate: step 2/4. It participates in amino-acid biosynthesis; L-valine biosynthesis; L-valine from pyruvate: step 2/4. Involved in the biosynthesis of branched-chain amino acids (BCAA). Catalyzes an alkyl-migration followed by a ketol-acid reduction of (S)-2-acetolactate (S2AL) to yield (R)-2,3-dihydroxy-isovalerate. In the isomerase reaction, S2AL is rearranged via a Mg-dependent methyl migration to produce 3-hydroxy-3-methyl-2-ketobutyrate (HMKB). In the reductase reaction, this 2-ketoacid undergoes a metal-dependent reduction by NADPH to yield (R)-2,3-dihydroxy-isovalerate. The sequence is that of Ketol-acid reductoisomerase (NADP(+)) from Shewanella amazonensis (strain ATCC BAA-1098 / SB2B).